A 337-amino-acid polypeptide reads, in one-letter code: Glyceraldehyde-3-phosphate dehydrogenase, cytosolic (337 aa).

Positions 1–151 (MAKVKVGING…YKSDLNIVSN (151 aa)) are binding to NAD. NAD(+) is bound by residues 13–14 (RI), Asp35, and Arg82. Residues 152-337 (ASCTTNCLAP…DLIMHISKCQ (186 aa)) are catalytic. D-glyceraldehyde 3-phosphate is bound by residues 153-155 (SCT), Thr184, 213-214 (TG), and Arg236. Cys154 serves as the catalytic Nucleophile. Asn318 is an NAD(+) binding site.

Belongs to the glyceraldehyde-3-phosphate dehydrogenase family. Homotetramer.

The protein localises to the cytoplasm. The enzyme catalyses D-glyceraldehyde 3-phosphate + phosphate + NAD(+) = (2R)-3-phospho-glyceroyl phosphate + NADH + H(+). Its pathway is carbohydrate degradation; glycolysis; pyruvate from D-glyceraldehyde 3-phosphate: step 1/5. Its function is as follows. Key enzyme in glycolysis that catalyzes the first step of the pathway by converting D-glyceraldehyde 3-phosphate (G3P) into 3-phospho-D-glyceroyl phosphate. Essential for the maintenance of cellular ATP levels and carbohydrate metabolism. In Mesembryanthemum crystallinum (Common ice plant), this protein is Glyceraldehyde-3-phosphate dehydrogenase, cytosolic (GAPC).